Consider the following 116-residue polypeptide: Large ribosomal subunit protein bL17 (116 aa).

The protein belongs to the bacterial ribosomal protein bL17 family. As to quaternary structure, part of the 50S ribosomal subunit. Contacts protein L32.

This chain is Large ribosomal subunit protein bL17, found in Picosynechococcus sp. (strain ATCC 27264 / PCC 7002 / PR-6) (Agmenellum quadruplicatum).